A 180-amino-acid polypeptide reads, in one-letter code: ATP synthase subunit b (180 aa).

The chain crosses the membrane as a helical span at residues 15-35; it reads LIPEVPELVIGLLAFAIVFFV.

The protein belongs to the ATPase B chain family. F-type ATPases have 2 components, F(1) - the catalytic core - and F(0) - the membrane proton channel. F(1) has five subunits: alpha(3), beta(3), gamma(1), delta(1), epsilon(1). F(0) has three main subunits: a(1), b(2) and c(10-14). The alpha and beta chains form an alternating ring which encloses part of the gamma chain. F(1) is attached to F(0) by a central stalk formed by the gamma and epsilon chains, while a peripheral stalk is formed by the delta and b chains.

It localises to the cell membrane. Its function is as follows. F(1)F(0) ATP synthase produces ATP from ADP in the presence of a proton or sodium gradient. F-type ATPases consist of two structural domains, F(1) containing the extramembraneous catalytic core and F(0) containing the membrane proton channel, linked together by a central stalk and a peripheral stalk. During catalysis, ATP synthesis in the catalytic domain of F(1) is coupled via a rotary mechanism of the central stalk subunits to proton translocation. Functionally, component of the F(0) channel, it forms part of the peripheral stalk, linking F(1) to F(0). In Streptomyces avermitilis (strain ATCC 31267 / DSM 46492 / JCM 5070 / NBRC 14893 / NCIMB 12804 / NRRL 8165 / MA-4680), this protein is ATP synthase subunit b.